Here is a 530-residue protein sequence, read N- to C-terminus: UDP-glucuronosyltransferase 2B15 (530 aa).

Positions 1–23 are cleaved as a signal peptide; sequence MSLKWTSVFLLIQLSCYFSSGSC. Asparagine 65 carries N-linked (GlcNAc...) asparagine glycosylation. Lysine 136 carries the post-translational modification N6-succinyllysine. N-linked (GlcNAc...) asparagine glycosylation is found at asparagine 316 and asparagine 483. A helical membrane pass occupies residues 495–515; it reads IAFLLACVATVIFIITKFCLF.

The protein belongs to the UDP-glycosyltransferase family. Expressed in many tissues. Present in liver, prostate and testis.

The protein localises to the endoplasmic reticulum membrane. The enzyme catalyses glucuronate acceptor + UDP-alpha-D-glucuronate = acceptor beta-D-glucuronoside + UDP + H(+). It carries out the reaction 17alpha-estradiol + UDP-alpha-D-glucuronate = 17alpha-estradiol 3-O-(beta-D-glucuronate) + UDP + H(+). It catalyses the reaction 16alpha,17alpha-estriol + UDP-alpha-D-glucuronate = 16alpha,17alpha-estriol 3-O-(beta-D-glucuronate) + UDP + H(+). The catalysed reaction is 17beta-hydroxy-5alpha-androstan-3-one + UDP-alpha-D-glucuronate = 5alpha-dihydrotestosterone 17-O-(beta-D-glucuronate) + UDP + H(+). In terms of biological role, UDP-glucuronosyltransferase (UGT) that catalyzes phase II biotransformation reactions in which lipophilic substrates are conjugated with glucuronic acid to increase the metabolite's water solubility, thereby facilitating excretion into either the urine or bile. Essential for the elimination and detoxification of drugs, xenobiotics and endogenous compounds. Catalyzes the glucuronidation of endogenous steroid hormones such as androgens (testosterone, androsterone) and estrogens (estradiol, epiestradiol, estriol, catechol estrogens). Displays glucuronidation activity toward several classes of xenobiotic substrates, including phenolic compounds (eugenol, 4-nitrophenol, 4-hydroxybiphenyl) and phenylpropanoids (naringenin, coumarins). Catalyzes the glucuronidation of monoterpenoid alcohols such as borneol, menthol and isomenthol, a class of natural compounds used in essential oils. The polypeptide is UDP-glucuronosyltransferase 2B15 (Homo sapiens (Human)).